We begin with the raw amino-acid sequence, 201 residues long: Recombination protein RecR (201 aa).

A C4-type zinc finger spans residues 60-75 (CHECGNVDTSDPCTIC). The Toprim domain occupies 83–178 (SILVVVEDVS…KVTKLAHGVP (96 aa)).

Belongs to the RecR family.

May play a role in DNA repair. It seems to be involved in an RecBC-independent recombinational process of DNA repair. It may act with RecF and RecO. The chain is Recombination protein RecR from Methylobacterium nodulans (strain LMG 21967 / CNCM I-2342 / ORS 2060).